A 525-amino-acid polypeptide reads, in one-letter code: Arabinose import ATP-binding protein AraG 2 (525 aa).

The disordered stretch occupies residues 1–25 (MTDTTIRARGAQAAGSPAGAGPLDA). A compositionally biased stretch (low complexity) spans 7–25 (RARGAQAAGSPAGAGPLDA). ABC transporter domains lie at 35 to 270 (LELD…MVGR) and 281 to 524 (REPG…LALP). ATP is bound at residue 67–74 (GENGAGKS).

It belongs to the ABC transporter superfamily. Arabinose importer (TC 3.A.1.2.2) family. In terms of assembly, the complex is composed of two ATP-binding proteins (AraG), two transmembrane proteins (AraH) and a solute-binding protein (AraF).

It is found in the cell inner membrane. It catalyses the reaction L-arabinose(out) + ATP + H2O = L-arabinose(in) + ADP + phosphate + H(+). Part of the ABC transporter complex AraFGH involved in arabinose import. Responsible for energy coupling to the transport system. This chain is Arabinose import ATP-binding protein AraG 2, found in Burkholderia thailandensis (strain ATCC 700388 / DSM 13276 / CCUG 48851 / CIP 106301 / E264).